The sequence spans 195 residues: 3-isopropylmalate dehydratase small subunit (195 aa).

It belongs to the LeuD family. LeuD type 1 subfamily. Heterodimer of LeuC and LeuD.

The catalysed reaction is (2R,3S)-3-isopropylmalate = (2S)-2-isopropylmalate. Its pathway is amino-acid biosynthesis; L-leucine biosynthesis; L-leucine from 3-methyl-2-oxobutanoate: step 2/4. Catalyzes the isomerization between 2-isopropylmalate and 3-isopropylmalate, via the formation of 2-isopropylmaleate. This chain is 3-isopropylmalate dehydratase small subunit, found in Karelsulcia muelleri (strain GWSS) (Sulcia muelleri).